Reading from the N-terminus, the 262-residue chain is Dihydroorotate dehydrogenase B (NAD(+)), electron transfer subunit (262 aa).

The 102-residue stretch at 3–104 folds into the FAD-binding FR-type domain; that stretch reads KLQEMMTIVS…MGPLGNGFPV (102 aa). Residues 53 to 56, 70 to 72, and 79 to 80 each bind FAD; these read RPIS, LYR, and GT. 4 residues coordinate [2Fe-2S] cluster: Cys226, Cys231, Cys234, and Cys249.

This sequence belongs to the PyrK family. As to quaternary structure, heterotetramer of 2 PyrK and 2 PyrD type B subunits. The cofactor is [2Fe-2S] cluster. FAD is required as a cofactor.

It participates in pyrimidine metabolism; UMP biosynthesis via de novo pathway; orotate from (S)-dihydroorotate (NAD(+) route): step 1/1. In terms of biological role, responsible for channeling the electrons from the oxidation of dihydroorotate from the FMN redox center in the PyrD type B subunit to the ultimate electron acceptor NAD(+). This chain is Dihydroorotate dehydrogenase B (NAD(+)), electron transfer subunit, found in Lactococcus lactis subsp. lactis (strain IL1403) (Streptococcus lactis).